The primary structure comprises 142 residues: Galactose-6-phosphate isomerase subunit LacA (142 aa).

It belongs to the LacAB/RpiB family. As to quaternary structure, heteromultimeric protein consisting of LacA and LacB.

It catalyses the reaction aldehydo-D-galactose 6-phosphate = keto-D-tagatose 6-phosphate. It functions in the pathway carbohydrate metabolism; D-galactose 6-phosphate degradation; D-tagatose 6-phosphate from D-galactose 6-phosphate: step 1/1. This chain is Galactose-6-phosphate isomerase subunit LacA, found in Streptococcus mutans serotype c (strain ATCC 700610 / UA159).